The following is a 721-amino-acid chain: Angiomotin-like 2a (721 aa).

The tract at residues 35–84 is disordered; the sequence is QQALRGGSSGGGAGSPRSSLESLTQEESLSPQLSARQEPQGQEHQGDFQH. Low complexity predominate over residues 49–68; the sequence is SPRSSLESLTQEESLSPQLS. At Y103 the chain carries Phosphotyrosine; by FGFR1. The interval 169–214 is disordered; that stretch reads DNIPMSSSHSYPQLSNNHSDTVVNEQSVHQPDQRGPPPEYPFMVRS. Positions 172–198 are enriched in polar residues; that stretch reads PMSSSHSYPQLSNNHSDTVVNEQSVHQ. Positions 275–531 form a coiled coil; that stretch reads ANNFQMEQLI…TRWEQKYLEE (257 aa). Polar residues predominate over residues 554 to 567; the sequence is INHSPRNSPNSSFN. 2 disordered regions span residues 554 to 575 and 666 to 709; these read INHSPRNSPNSSFNEDLPSPNH and DSST…TQIS. The segment covering 688–702 has biased composition (low complexity); it reads SAPEPSTASSSESTS. The PDZ-binding motif lies at 718–721; sequence EILI.

This sequence belongs to the angiomotin family. Interacts with SRC. Phosphorylation at Tyr-103 is necessary for efficient binding to SRC and synergistically functioning with SRC to activate the downstream MAPK pathway. In terms of tissue distribution, expressed in endothelial cells.

Its subcellular location is the recycling endosome. The protein resides in the cytoplasm. It localises to the cell projection. The protein localises to the podosome. It is found in the cell junction. In terms of biological role, required for proper architecture of actin filaments and for cell movements during embryogenesis. Plays a role in the radial actin fiber architecture in skin epithelial cells, thereby maintains cell geometry, size and cell interconnectivity within the skin. Plays an important role in coupling actin fibers to cell junctions in endothelial cells and is therefore required for correct endothelial cell morphology and maintenance of dorsal aorta lumen expansion during embryogenesis. May further play a role in the polarity, proliferation and migration of endothelial cells, and therefore participates in angiogenesis. Inhibits the Wnt/beta-catenin signaling pathway, probably by recruiting CTNNB1 to recycling endosomes and hence preventing its translocation to the nucleus. Regulates the translocation of phosphorylated SRC to peripheral cell-matrix adhesion sites. Selectively promotes FGF-induced MAPK activation through SRC. The sequence is that of Angiomotin-like 2a (amotl2a) from Danio rerio (Zebrafish).